A 262-amino-acid chain; its full sequence is Aminoglycoside 3'-phosphotransferase (262 aa).

Aspartate 187 (proton acceptor) is an active-site residue.

It belongs to the aminoglycoside phosphotransferase family. In terms of assembly, monomer.

It localises to the cytoplasm. It carries out the reaction kanamycin A + ATP = kanamycin 3'-phosphate + ADP + H(+). Functionally, resistance to butirosin and structurally-related aminoglycosides, including kanamycin and amikacin. This is Aminoglycoside 3'-phosphotransferase from Niallia circulans (Bacillus circulans).